The following is a 359-amino-acid chain: Thymidine kinase (359 aa).

Residue 17–24 participates in ATP binding; the sequence is GAHGLGKT. The active-site Proton acceptor is the Glu-45. Gln-99 contacts substrate. Arg-187 serves as a coordination point for ATP. Arg-193 contacts substrate.

This sequence belongs to the herpesviridae thymidine kinase family. In terms of assembly, homodimer.

The catalysed reaction is thymidine + ATP = dTMP + ADP + H(+). In terms of biological role, catalyzes the transfer of the gamma-phospho group of ATP to thymidine to generate dTMP in the salvage pathway of pyrimidine synthesis. The dTMP serves as a substrate for DNA polymerase during viral DNA replication. Allows the virus to be reactivated and to grow in non-proliferative cells lacking a high concentration of phosphorylated nucleic acid precursors. The chain is Thymidine kinase from Bos taurus (Bovine).